A 499-amino-acid polypeptide reads, in one-letter code: Ubiquitin carboxyl-terminal hydrolase 16 (499 aa).

The USP domain occupies 53-497 (VGLINRGNDC…YAYMLYYERV (445 aa)). The Nucleophile role is filled by cysteine 62. Histidine 407 functions as the Proton acceptor in the catalytic mechanism.

It belongs to the peptidase C19 family.

It catalyses the reaction Thiol-dependent hydrolysis of ester, thioester, amide, peptide and isopeptide bonds formed by the C-terminal Gly of ubiquitin (a 76-residue protein attached to proteins as an intracellular targeting signal).. The polypeptide is Ubiquitin carboxyl-terminal hydrolase 16 (UBP16) (Saccharomyces cerevisiae (strain ATCC 204508 / S288c) (Baker's yeast)).